The chain runs to 240 residues: Ribonuclease 3 (240 aa).

The 133-residue stretch at 9–141 (VEEFQKETGI…LLAAIYLDQG (133 aa)) folds into the RNase III domain. Glu-54 lines the Mg(2+) pocket. The active site involves Asp-58. Positions 127 and 130 each coordinate Mg(2+). Glu-130 is a catalytic residue. The region spanning 168–237 (DYKTALQEIV…ARIAYEKLLK (70 aa)) is the DRBM domain.

This sequence belongs to the ribonuclease III family. Homodimer. It depends on Mg(2+) as a cofactor.

The protein resides in the cytoplasm. The enzyme catalyses Endonucleolytic cleavage to 5'-phosphomonoester.. In terms of biological role, digests double-stranded RNA. Involved in the processing of primary rRNA transcript to yield the immediate precursors to the large and small rRNAs (23S and 16S). Also processes some mRNAs, and tRNAs when they are encoded in the rRNA operon. Probably processes pre-crRNA and tracrRNA of type II CRISPR loci if present in the organism. This chain is Ribonuclease 3 (rnc), found in Thermotoga maritima (strain ATCC 43589 / DSM 3109 / JCM 10099 / NBRC 100826 / MSB8).